The sequence spans 526 residues: Fatty-acid amide hydrolase 2-B (526 aa).

A helical transmembrane segment spans residues 12–32 (CLLVLVSGLFLALFRLLSPGT). Residues lysine 128 and serine 203 each act as charge relay system in the active site. The Acyl-ester intermediate role is filled by serine 227.

This sequence belongs to the amidase family.

The protein localises to the membrane. The catalysed reaction is N-(5Z,8Z,11Z,14Z-eicosatetraenoyl)-ethanolamine + H2O = ethanolamine + (5Z,8Z,11Z,14Z)-eicosatetraenoate. It catalyses the reaction (9Z)-octadecenamide + H2O = (9Z)-octadecenoate + NH4(+). The chain is Fatty-acid amide hydrolase 2-B (faah2b) from Danio rerio (Zebrafish).